A 56-amino-acid polypeptide reads, in one-letter code: Large ribosomal subunit protein bL33 (56 aa).

Belongs to the bacterial ribosomal protein bL33 family.

In Dichelobacter nodosus (strain VCS1703A), this protein is Large ribosomal subunit protein bL33.